A 456-amino-acid chain; its full sequence is Probable tRNA(Ile)-lysidine synthase (456 aa).

30-35 provides a ligand contact to ATP; sequence SGGVDS.

This sequence belongs to the tRNA(Ile)-lysidine synthase family.

It is found in the cytoplasm. The catalysed reaction is cytidine(34) in tRNA(Ile2) + L-lysine + ATP = lysidine(34) in tRNA(Ile2) + AMP + diphosphate + H(+). Functionally, ligates lysine onto the cytidine present at position 34 of the AUA codon-specific tRNA(Ile) that contains the anticodon CAU, in an ATP-dependent manner. Cytidine is converted to lysidine, thus changing the amino acid specificity of the tRNA from methionine to isoleucine. The chain is Probable tRNA(Ile)-lysidine synthase from Schizosaccharomyces pombe (strain 972 / ATCC 24843) (Fission yeast).